A 435-amino-acid chain; its full sequence is Methylenetetrahydrofolate--tRNA-(uracil-5-)-methyltransferase TrmFO (435 aa).

Residue 7–12 (GAGLAG) coordinates FAD.

The protein belongs to the MnmG family. TrmFO subfamily. Requires FAD as cofactor.

It is found in the cytoplasm. The catalysed reaction is uridine(54) in tRNA + (6R)-5,10-methylene-5,6,7,8-tetrahydrofolate + NADH + H(+) = 5-methyluridine(54) in tRNA + (6S)-5,6,7,8-tetrahydrofolate + NAD(+). It carries out the reaction uridine(54) in tRNA + (6R)-5,10-methylene-5,6,7,8-tetrahydrofolate + NADPH + H(+) = 5-methyluridine(54) in tRNA + (6S)-5,6,7,8-tetrahydrofolate + NADP(+). In terms of biological role, catalyzes the folate-dependent formation of 5-methyl-uridine at position 54 (M-5-U54) in all tRNAs. This chain is Methylenetetrahydrofolate--tRNA-(uracil-5-)-methyltransferase TrmFO, found in Thermotoga petrophila (strain ATCC BAA-488 / DSM 13995 / JCM 10881 / RKU-1).